The chain runs to 210 residues: A-kinase-interacting protein 1 (210 aa).

Disordered regions lie at residues 58 to 80 (HLEKQPAAGPQRVLPGEREERPP) and 136 to 162 (QRKDRKKTSLGPGGSYQISEHAPEASQ).

Interacts with PRKACA and RELA. As to expression, expressed at high levels in adult heart and at lower levels in brain, testis, ovary and skeletal muscle. Up-regulated in some breast cancer cell lines. Isoform 1 and isoform 3 are expressed in fetal brain.

It is found in the nucleus. In terms of biological role, enhances NF-kappa-B transcriptional activity by regulating the nuclear localization of the NF-kappa-B subunit RELA and promoting the phosphorylation of RELA by PRKACA. Regulates the effect of the cAMP-dependent protein kinase signaling pathway on the NF-kappa-B activation cascade. This chain is A-kinase-interacting protein 1 (AKIP1), found in Homo sapiens (Human).